Reading from the N-terminus, the 354-residue chain is COP9 signalosome complex subunit 5 (354 aa).

The region spanning 56 to 193 (VLVSSIALVK…IGAFRTYPKD (138 aa)) is the MPN domain. His139, His141, and Asp152 together coordinate Zn(2+). The JAMM motif motif lies at 139 to 152 (HSHPGYGCWLSGID). The interval 193 to 212 (DYKPPKKATKQNQDQSVPLS) is disordered.

It belongs to the peptidase M67A family. CSN5 subfamily. In terms of assembly, component of the COP9 signalosome (CSN) complex.

It localises to the cytoplasm. The protein resides in the nucleus. Its function is as follows. Catalytic Component of the COP9 signalosome (CSN) complex that acts as an regulator of the ubiquitin (Ubl) conjugation pathway by mediating the deneddylation of the cullin subunit of SCF-type E3 ubiquitin-protein ligase complexes. The chain is COP9 signalosome complex subunit 5 (RRI1) from Yarrowia lipolytica (strain CLIB 122 / E 150) (Yeast).